Consider the following 1738-residue polypeptide: Complement C4-B (1738 aa).

The signal sequence occupies residues 1-19; that stretch reads MRLLWGLAWVFSFCASSLQ. Cysteine 66 and cysteine 95 are oxidised to a cystine. Asparagine 224 carries an N-linked (GlcNAc...) asparagine glycan. A disulfide bridge links cysteine 633 with cysteine 667. Positions 674 to 677 are excised as a propeptide; it reads RQKR. Cystine bridges form between cysteine 700/cysteine 726, cysteine 701/cysteine 733, and cysteine 714/cysteine 734. Residues 700–734 enclose the Anaphylatoxin-like domain; it reads CCQDGMTKLPMKRTCEQRAARVPQQACREPFLSCC. Asparagine 743 carries an N-linked (GlcNAc...) asparagine glycan. The isoglutamyl cysteine thioester (Cys-Gln) cross-link spans 1006 to 1009; sequence CAEQ. Residues asparagine 1324 and asparagine 1387 are each glycosylated (N-linked (GlcNAc...) asparagine). A sulfotyrosine mark is found at tyrosine 1413, tyrosine 1416, and tyrosine 1417. Positions 1444–1447 are excised as a propeptide; that stretch reads RRRR. Disulfide bonds link cysteine 1465–cysteine 1529, cysteine 1577–cysteine 1582, cysteine 1589–cysteine 1667, cysteine 1612–cysteine 1736, and cysteine 1712–cysteine 1721. The 148-residue stretch at 1589 to 1736 folds into the NTR domain; the sequence is CPRLLRSLER…FLMEFSSRGC (148 aa).

In terms of assembly, in absence of complement activation, circulates in blood as a disulfide-linked trimer of an alpha, beta and gamma chain. Complement C4b is composed of complement C4b-A, complement C4 beta and complement C4 gamma chains that are associated via disulfide bonds. Non-enzymatic component of the C3 convertase, also named C4bC2b, composed of the serine protease complement C2b (C2), as well as complement C4b. Non-enzymatic component of the C5 convertase, also named C4bC2bC3b, composed of the serine protease complement C2b (C2), complement C3b, as well as complement C4b. Post-translationally, prior to secretion, the single-chain precursor is enzymatically cleaved by plasminogen (PLG) to yield non-identical chains alpha, beta and gamma. During activation of the complement systems, the alpha chain is cleaved into C4a and C4b by different proteases depending on the complement pathway: C4b stays linked to the beta and gamma chains, while C4a is released in the plasma. The alpha chain is cleaved by C1S to generate C4a and C4b following activation by the classical complement system. The alpha chain is cleaved to generate C4a and C4b by MASP2 following activation by the lectin complement system. The alpha chain is cleaved by GZMK to generate C4a and C4b following activation by the GZMK complement system. Further degradation of C4b by C1 into the inactive fragments C4c and C4d blocks the generation of C3 convertase. The proteolytic cleavages often are incomplete so that many structural forms can be found in plasma. In terms of processing, upon activation, the internal thioester bond reacts with carbohydrate antigens on the target surface to form amide or ester bonds, leading to covalent association with the surface of pathogens. Complement C4b interacts with complement C3b via a thioester linkage.

It localises to the secreted. It is found in the cell surface. Functionally, precursor of non-enzymatic components of the classical, lectin and GZMK complement pathways, which consist in a cascade of proteins that leads to phagocytosis and breakdown of pathogens and signaling that strengthens the adaptive immune system. Non-enzymatic component of C3 and C5 convertases. Generated following cleavage by complement proteases (C1S, MASP2 or GZMK, depending on the complement pathway), it covalently attaches to the surface of pathogens, where it acts as an opsonin that marks the surface of antigens for removal. It then recruits the serine protease complement C2b to form the C3 and C5 convertases, which cleave and activate C3 and C5, respectively, the next components of the complement pathways. Complement C4b-A isotype is responsible for effective binding to form amide bonds with immune aggregates or protein antigens, while complement C4b-B isotype catalyzes the transacylation of the thioester carbonyl group to form ester bonds with carbohydrate antigens. In terms of biological role, putative humoral mediator released following cleavage by complement proteases (C1S, MASP2 or GZMK, depending on the complement pathway). While it is strongly similar to anaphylatoxins, its role is unclear. Was reported to act as a mediator of local inflammatory process; however these effects were probably due to contamination with C3a and/C5a anaphylatoxins in biological assays. The protein is Complement C4-B of Mus musculus (Mouse).